The primary structure comprises 336 residues: Anthranilate phosphoribosyltransferase (336 aa).

Residues Gly-79, Gly-82–Asp-83, Thr-87, Asn-89–Ser-92, Lys-107–Ser-115, and Ser-119 each bind 5-phospho-alpha-D-ribose 1-diphosphate. Gly-79 lines the anthranilate pocket. Residue Ser-91 coordinates Mg(2+). Asn-110 contributes to the anthranilate binding site. Arg-165 lines the anthranilate pocket. Positions 223 and 224 each coordinate Mg(2+).

This sequence belongs to the anthranilate phosphoribosyltransferase family. As to quaternary structure, homodimer. Requires Mg(2+) as cofactor.

It catalyses the reaction N-(5-phospho-beta-D-ribosyl)anthranilate + diphosphate = 5-phospho-alpha-D-ribose 1-diphosphate + anthranilate. It functions in the pathway amino-acid biosynthesis; L-tryptophan biosynthesis; L-tryptophan from chorismate: step 2/5. In terms of biological role, catalyzes the transfer of the phosphoribosyl group of 5-phosphorylribose-1-pyrophosphate (PRPP) to anthranilate to yield N-(5'-phosphoribosyl)-anthranilate (PRA). The chain is Anthranilate phosphoribosyltransferase from Tolumonas auensis (strain DSM 9187 / NBRC 110442 / TA 4).